The sequence spans 220 residues: Small ribosomal subunit protein mS42 (220 aa).

Belongs to the mitochondrion-specific ribosomal protein mS42 family. As to quaternary structure, component of the mitochondrial small ribosomal subunit (mt-SSU). Mature yeast 74S mitochondrial ribosomes consist of a small (37S) and a large (54S) subunit. The 37S small subunit contains a 15S ribosomal RNA (15S mt-rRNA) and at least 32 different proteins. The 54S large subunit contains a 21S rRNA (21S mt-rRNA) and at least 45 different proteins. mS43 forms a dimer with mS42, building a large protuberance adjacent to the mRNA channel exit in the mt-SSU body.

It is found in the mitochondrion. In terms of biological role, component of the mitochondrial ribosome (mitoribosome), a dedicated translation machinery responsible for the synthesis of mitochondrial genome-encoded proteins, including at least some of the essential transmembrane subunits of the mitochondrial respiratory chain. The mitoribosomes are attached to the mitochondrial inner membrane and translation products are cotranslationally integrated into the membrane. The polypeptide is Small ribosomal subunit protein mS42 (Schizosaccharomyces pombe (strain 972 / ATCC 24843) (Fission yeast)).